The following is a 351-amino-acid chain: AA9 family lytic polysaccharide monooxygenase A (351 aa).

Residue His1 participates in Cu(2+) binding. Cys52 and Cys178 are disulfide-bonded. Asn53 is a glycosylation site (N-linked (GlcNAc...) asparagine). A Cu(2+)-binding site is contributed by His86. N-linked (GlcNAc...) asparagine glycosylation is present at Asn138. His164 and Gln173 together coordinate O2. Tyr175 is a Cu(2+) binding site. Ser280 is lipidated: GPI-anchor amidated serine. The propeptide at 281–351 is removed in mature form; it reads SAIGTSTASS…RSGTLGRLSF (71 aa).

The protein belongs to the polysaccharide monooxygenase AA9 family. It depends on Cu(2+) as a cofactor.

The protein localises to the cell membrane. The enzyme catalyses [(1-&gt;4)-beta-D-glucosyl]n+m + reduced acceptor + O2 = 4-dehydro-beta-D-glucosyl-[(1-&gt;4)-beta-D-glucosyl]n-1 + [(1-&gt;4)-beta-D-glucosyl]m + acceptor + H2O.. Its function is as follows. Lytic polysaccharide monooxygenase (LPMO) that depolymerizes crystalline and amorphous polysaccharides via the oxidation of scissile alpha- or beta-(1-4)-glycosidic bonds, yielding C1 or C4 oxidation products. Catalysis by LPMOs requires the reduction of the active-site copper from Cu(II) to Cu(I) by a reducing agent and H(2)O(2) or O(2) as a cosubstrate. Has broad specificity, cleaving at any position along the beta-glucan backbone of xyloglucan, regardless of substitutions. Shows minor activity on glucomannan. This is AA9 family lytic polysaccharide monooxygenase A from Gloeophyllum trabeum (Brown rot fungus).